Consider the following 511-residue polypeptide: MKCLLCLAFLFIGVNCKFTIVFPHNQKGNWKNVPSNYHYCPSSSDLNWHNDLIGTALQVKMPKSHKAIQADGWMCHASKWITTCDFRWYGPKYITHSIQSFTPSVEQCKESIEQTKQGTWLNPGFPPQSCGYATVTDAEAVIVQVTPHHVLVDEYTGEWVDSQFINGKCSNDICLTVHNSTTWHSDYKVKGLCDSNLISMDITFFSEDGELSSLGKAGTGFRSNYFAYETGDKACKMQYCKHWGVRLPSGVWFEMADKDLFAAAKFPECPEGSSISAPSQTSVDVSLIQDVERILDYSLCQETWSKIRAGLPISPVDLSYLAPKNPGTGPAFTIINGTLKYFETRYIRVDIAAPILSRMVGMISGTNTERELWEDWAPYEDVEIGPNGVLRTSSGYKFPLYMIGHGMLDSDLHLSSKVQVFEHPHIQDAASQLPDDETLFFGDTGLSKNPIELVEGWFSGWKSSIASFFFIIGLIIGLFLVLRVGIYLCIKLKHTRKRKIYADIEMNRLGK.

The signal sequence occupies residues 1 to 16 (MKCLLCLAFLFIGVNC). Over 17–467 (KFTIVFPHNQ…FSGWKSSIAS (451 aa)) the chain is Virion surface. The tract at residues 18 to 35 (FTIVFPHNQKGNWKNVPS) is trimerization. Cystine bridges form between cysteine 40-cysteine 300, cysteine 75-cysteine 108, cysteine 84-cysteine 130, cysteine 169-cysteine 174, cysteine 193-cysteine 240, and cysteine 235-cysteine 269. The tract at residues 53-172 (IGTALQVKMP…QFINGKCSND (120 aa)) is fusion peptide. N-linked (GlcNAc...) asparagine; by host glycosylation is present at asparagine 179. Positions 259–309 (DLFAAAKFPECPEGSSISAPSQTSVDVSLIQDVERILDYSLCQETWSKIRA) are trimerization. Asparagine 336 is a glycosylation site (N-linked (GlcNAc...) asparagine; by host). The segment at 383–405 (EIGPNGVLRTSSGYKFPLYMIGH) is trimerization. Residues 468 to 488 (FFFIIGLIIGLFLVLRVGIYL) form a helical membrane-spanning segment. Cysteine 489 carries the S-palmitoyl cysteine; by host lipid modification. At 489–511 (CIKLKHTRKRKIYADIEMNRLGK) the chain is on the intravirion side. The short motif at 496 to 506 (RKRKIYADIEM) is the basolateral targeting ex vivo element.

This sequence belongs to the vesiculovirus glycoprotein family. Homotrimer. Interacts with host LDL at target cell surface. Glycosylated by host. Palmitoylated by host.

It localises to the virion membrane. It is found in the host membrane. In terms of biological role, attaches the virus to host LDL receptors, inducing clathrin-dependent endocytosis of the virion. In the endosome, the acidic pH induces conformational changes in the glycoprotein trimer, which trigger fusion between virus and endosomal membrane. This is Glycoprotein (G) from Aedes (Bovine).